Here is a 23-residue protein sequence, read N- to C-terminus: Basic phospholipase A2 intermexin (23 aa).

Belongs to the phospholipase A2 family. Group II subfamily. Ca(2+) is required as a cofactor. Contains 7 disulfide bonds. Expressed by the venom gland.

The protein resides in the secreted. The catalysed reaction is a 1,2-diacyl-sn-glycero-3-phosphocholine + H2O = a 1-acyl-sn-glycero-3-phosphocholine + a fatty acid + H(+). Functionally, snake venom phospholipase A2 (PLA2) that shows presynaptic neurotoxicity and low myotoxicity. PLA2 catalyzes the calcium-dependent hydrolysis of the 2-acyl groups in 3-sn-phosphoglycerides. The sequence is that of Basic phospholipase A2 intermexin from Gloydius intermedius (Central Asian pit viper).